The chain runs to 338 residues: MDMILGISAYRKETKTGLRNTIYTAINTGKVKKILLGLDKPEDKEIFNDIINEFKDYIIDVVYAEGLGANRNELLVRGSEENEDYICLADSHLYFITPVADIVKTMCNSQACDFKRFDFGFDVENNPLSVLNRSVHHFGQFNIDRLANNYIFSCEYKYYANNPFLCFKKSAIKELLNIYGGKIIPWQHYGADMEQIYVSIVRRYGRTAGKCIGTSPIYGHRATVSNTEHEFWKSRWTIKDYSEGWYQANACFLALHIPRELWNLKPRIFEPDKCKLHINFIKSTLEDSQASSRGTASMIYAVDGIDRNILNYLGKYTADSTGTVSLTNLQPGKYIAIE.

This is an uncharacterized protein from Thermoproteus tenax (TTV1).